The chain runs to 415 residues: Tyrosine--tRNA ligase (415 aa).

Positions 54 to 63 match the 'HIGH' region motif; that stretch reads PTGRDIHLGH. The 'KMSKS' region motif lies at 248–252; that stretch reads KMSKS. Lys251 lines the ATP pocket. In terms of domain architecture, S4 RNA-binding spans 351–415; sequence AKAFYLLSAI…GKKTFRRLTR (65 aa).

The protein belongs to the class-I aminoacyl-tRNA synthetase family. TyrS type 2 subfamily. In terms of assembly, homodimer.

The protein resides in the cytoplasm. It catalyses the reaction tRNA(Tyr) + L-tyrosine + ATP = L-tyrosyl-tRNA(Tyr) + AMP + diphosphate + H(+). Its function is as follows. Catalyzes the attachment of tyrosine to tRNA(Tyr) in a two-step reaction: tyrosine is first activated by ATP to form Tyr-AMP and then transferred to the acceptor end of tRNA(Tyr). The chain is Tyrosine--tRNA ligase from Prochlorococcus marinus (strain MIT 9313).